A 454-amino-acid chain; its full sequence is Growth/differentiation factor 6 (454 aa).

An N-terminal signal peptide occupies residues 1-22; it reads MDTPRVLLWAIFLISFLWDLPG. Residues 23–334 constitute a propeptide that is removed on maturation; it reads FQQASISSSS…LPSPGRRRRR (312 aa). The segment at 28 to 93 is disordered; the sequence is ISSSSSSSTE…QGQEPPGRGL (66 aa). 2 stretches are compositionally biased toward basic and acidic residues: residues 39–52 and 60–73; these read DSTKDVGNRKEGKM and AEGRTPPEHGLRQK. Residues 81 to 92 show a composition bias toward low complexity; it reads GQHQGQEPPGRG. Asn117 is a glycosylation site (N-linked (GlcNAc...) asparagine). Disordered stretches follow at residues 247-268 and 303-350; these read DTGARARGPQQPPPLDLRSLGF and AEAA…KKSR. Residues 303–319 show a composition bias toward low complexity; it reads AEAAGAEGSWPAPSGSP. Residues 329–350 show a composition bias toward basic residues; it reads GRRRRRTAFASRHGKRHGKKSR. Disulfide bonds link Cys353–Cys419, Cys382–Cys451, and Cys386–Cys453.

The protein belongs to the TGF-beta family. As to quaternary structure, homodimer; disulfide-linked. In terms of tissue distribution, expressed in different subsets of developing joints. Highly expressed in the cochlea.

It is found in the secreted. In terms of biological role, growth factor that controls proliferation and cellular differentiation in the retina and bone formation. Plays a key role in regulating apoptosis during retinal development. Establishes dorsal-ventral positional information in the retina and controls the formation of the retinotectal map. Required for normal formation of bones and joints in the limbs, skull, digits and axial skeleton. Plays a key role in establishing boundaries between skeletal elements during development. Regulation of GDF6 expression seems to be a mechanism for evolving species-specific changes in skeletal structures. Seems to positively regulate differentiation of chondrogenic tissue through the growth factor receptors subunits BMPR1A, BMPR1B, BMPR2 and ACVR2A, leading to the activation of SMAD1-SMAD5-SMAD8 complex. The regulation of chondrogenic differentiation is inhibited by NOG. Also involved in the induction of adipogenesis from mesenchymal stem cells. This mechanism acts through the growth factor receptors subunits BMPR1A, BMPR2 and ACVR2A and the activation of SMAD1-SMAD5-SMAD8 complex and MAPK14/p38. The chain is Growth/differentiation factor 6 (Gdf6) from Mus musculus (Mouse).